The following is a 208-amino-acid chain: Ubiquitin-conjugating enzyme E2 S (208 aa).

Residues 14–160 form the UBC core domain; sequence QTIRQVMREL…ARMMTEIHAQ (147 aa). Catalysis depends on cysteine 98, which acts as the Glycyl thioester intermediate. The tract at residues 159–208 is disordered; that stretch reads AQPAKCASTTSDAKDDDGPSTKKHAGLDKKLQDKKKEKLLKEKKRMLKRL. Residues 170–198 show a composition bias toward basic and acidic residues; it reads DAKDDDGPSTKKHAGLDKKLQDKKKEKLL. A compositionally biased stretch (basic residues) spans 199–208; sequence KEKKRMLKRL.

Belongs to the ubiquitin-conjugating enzyme family.

The enzyme catalyses S-ubiquitinyl-[E1 ubiquitin-activating enzyme]-L-cysteine + [E2 ubiquitin-conjugating enzyme]-L-cysteine = [E1 ubiquitin-activating enzyme]-L-cysteine + S-ubiquitinyl-[E2 ubiquitin-conjugating enzyme]-L-cysteine.. Its pathway is protein modification; protein ubiquitination. Catalyzes the covalent attachment of ubiquitin to other proteins. Acts as an essential factor of the anaphase promoting complex/cyclosome (APC/C), a cell cycle-regulated ubiquitin ligase that controls progression through mitosis. Acts by specifically elongating polyubiquitin chains initiated by the E2 enzyme vih/UbcH10 on APC/C substrates, enhancing the degradation of APC/C substrates by the proteasome and promoting mitotic exit. The protein is Ubiquitin-conjugating enzyme E2 S of Drosophila willistoni (Fruit fly).